A 176-amino-acid polypeptide reads, in one-letter code: NAD(P)H-quinone oxidoreductase subunit 6, chloroplastic (176 aa).

Transmembrane regions (helical) follow at residues 10–30 (FLLVFLGSGLLVGGLGVVLLP), 32–52 (PIFSAFSLGFVLVCISLLYIL), 61–81 (AQLLIYVGAINVLIIFAVMFM), 92–112 (LWTVGNGITSLVCTTILFSLM), and 152–172 (FFLPFELISIILLVALIGAIS).

This sequence belongs to the complex I subunit 6 family. As to quaternary structure, NDH is composed of at least 16 different subunits, 5 of which are encoded in the nucleus.

Its subcellular location is the plastid. It localises to the chloroplast thylakoid membrane. The enzyme catalyses a plastoquinone + NADH + (n+1) H(+)(in) = a plastoquinol + NAD(+) + n H(+)(out). It carries out the reaction a plastoquinone + NADPH + (n+1) H(+)(in) = a plastoquinol + NADP(+) + n H(+)(out). NDH shuttles electrons from NAD(P)H:plastoquinone, via FMN and iron-sulfur (Fe-S) centers, to quinones in the photosynthetic chain and possibly in a chloroplast respiratory chain. The immediate electron acceptor for the enzyme in this species is believed to be plastoquinone. Couples the redox reaction to proton translocation, and thus conserves the redox energy in a proton gradient. This Barbarea verna (Land cress) protein is NAD(P)H-quinone oxidoreductase subunit 6, chloroplastic (ndhG).